The primary structure comprises 196 residues: Probable malonic semialdehyde reductase RutE (196 aa).

It belongs to the nitroreductase family. HadB/RutE subfamily. The cofactor is FMN.

The catalysed reaction is 3-hydroxypropanoate + NADP(+) = 3-oxopropanoate + NADPH + H(+). Functionally, may reduce toxic product malonic semialdehyde to 3-hydroxypropionic acid, which is excreted. The sequence is that of Probable malonic semialdehyde reductase RutE from Shigella dysenteriae serotype 1 (strain Sd197).